Reading from the N-terminus, the 395-residue chain is Immunity-related GTPase family M protein 2 (395 aa).

Positions 63–239 constitute an IRG-type G domain; that stretch reads NKIKIAVTGD…PKLRETLQKD (177 aa). Residues 72-79, 97-101, and 179-181 contribute to the GTP site; these read DSGNGMSS, TGVVR, and KLD.

It belongs to the TRAFAC class dynamin-like GTPase superfamily. IRG family. In terms of processing, ubiquitinated; polyubiquitinated in the cytosol, promoting Gbp1 recruitment to the T.gondii parasitophorous vacuole membranes.

The protein localises to the cytoplasmic vesicle membrane. Its subcellular location is the golgi apparatus membrane. It is found in the cytoplasm. It localises to the cytosol. It carries out the reaction GTP + H2O = GDP + phosphate + H(+). Functionally, immunity-related GTPase that plays important roles in innate immunity and inflammatory response. Acts as a dynamin-like protein that binds to intracellular membranes and promotes remodeling and trafficking of those membranes. Required for clearance of acute protozoan and bacterial infections. Acts by participating to Tgtp1/Irgb6 and Gbp1-mediated parasite killing by promoting their accumulation on the T.gondii parasitophorous vacuole membranes. Also required for prolonged loading of ubiquitin and p62/Sqstm1 to parasitophorous vacuole membranes. Also acts as a key negative regulator of the inflammatory response by inhibiting the non-canonical inflammasome, thereby protecting against Casp11-driven septic shock during endotoxemia. The polypeptide is Immunity-related GTPase family M protein 2 (Mus musculus (Mouse)).